The chain runs to 206 residues: Thymidylate kinase (206 aa).

An ATP-binding site is contributed by 11–18 (GIDGAGKT).

Belongs to the thymidylate kinase family.

It carries out the reaction dTMP + ATP = dTDP + ADP. Phosphorylation of dTMP to form dTDP in both de novo and salvage pathways of dTTP synthesis. In Paraburkholderia xenovorans (strain LB400), this protein is Thymidylate kinase.